Reading from the N-terminus, the 501-residue chain is Cytochrome P450 3A6 (501 aa).

Cys440 lines the heme pocket.

The protein belongs to the cytochrome P450 family. Requires heme as cofactor.

It localises to the endoplasmic reticulum membrane. Its subcellular location is the microsome membrane. It carries out the reaction an organic molecule + reduced [NADPH--hemoprotein reductase] + O2 = an alcohol + oxidized [NADPH--hemoprotein reductase] + H2O + H(+). In terms of biological role, exhibits progesterone 6 beta-hydroxylase activity. The protein is Cytochrome P450 3A6 (CYP3A6) of Oryctolagus cuniculus (Rabbit).